Consider the following 110-residue polypeptide: Ribonuclease H2 subunit C (110 aa).

Residues 45 to 69 (LKREKSATPSSSDNTTSNTFSNGAI) are disordered. Residues 51–66 (ATPSSSDNTTSNTFSN) are compositionally biased toward low complexity.

This sequence belongs to the RNase H2 subunit C family. Highly divergent. As to quaternary structure, the RNase 2 complex is a heterotrimer composed of the catalytic subunit RNH201 and of the non-catalytic subunits RNH202 and RNH203.

The protein localises to the cytoplasm. The protein resides in the nucleus. In terms of biological role, non catalytic subunit of RNase H2, an endonuclease that specifically degrades the RNA of RNA:DNA hybrids. Participates in DNA replication, possibly by mediating the removal of lagging-strand Okazaki fragment RNA primers during DNA replication. Mediates the excision of single ribonucleotides from DNA:RNA duplexes. In Saccharomyces cerevisiae (strain ATCC 204508 / S288c) (Baker's yeast), this protein is Ribonuclease H2 subunit C (RNH203).